The primary structure comprises 1443 residues: DNA polymerase III PolC-type (1443 aa).

The 160-residue stretch at 408–567 (FVIFDIETTG…YDTQALKKVF (160 aa)) folds into the Exonuclease domain.

It belongs to the DNA polymerase type-C family. PolC subfamily.

It localises to the cytoplasm. It carries out the reaction DNA(n) + a 2'-deoxyribonucleoside 5'-triphosphate = DNA(n+1) + diphosphate. Its function is as follows. Required for replicative DNA synthesis. This DNA polymerase also exhibits 3' to 5' exonuclease activity. The polypeptide is DNA polymerase III PolC-type (Mycoplasma pneumoniae (strain ATCC 29342 / M129 / Subtype 1) (Mycoplasmoides pneumoniae)).